The primary structure comprises 571 residues: Optineurin (571 aa).

2 disordered regions span residues 1-32 (MSHQ…HPNL) and 100-144 (LSHE…DQLR). A coiled-coil region spans residues 38-170 (EELLQQMKEL…VSELQLKLNS (133 aa)). Residues 58 to 209 (MKLNNQAMKG…GPTRTVSIGT (152 aa)) form an interaction with Rab8 region. Over residues 100-143 (LSHENEKLKEELGKLKGKSERSSEDPTDDSRLPRAEAEQEKDQL) the composition is skewed to basic and acidic residues. An LIR motif is present at residues 176-181 (DSFVEI). Serine 177 is modified (phosphoserine; by TBK1). Positions 186 to 197 (GEAEGSVKEIKH) are enriched in basic and acidic residues. 2 disordered regions span residues 186 to 210 (GEAE…IGTS) and 255 to 291 (VSDF…TVGS). At serine 198 the chain carries Phosphoserine. Residues 201 to 210 (PTRTVSIGTS) show a composition bias toward polar residues. A coiled-coil region spans residues 233 to 502 (CLREGNQKVE…LLKENDAFED (270 aa)). 2 stretches are compositionally biased toward basic and acidic residues: residues 255–268 (VSDF…RSEI) and 275–286 (STEKENEEEKGP). Serine 336 carries the phosphoserine modification. An interaction with HD region spans residues 405 to 571 (TRKESEKVDR…LQIHVMDCII (167 aa)). Residues 406 to 514 (RKESEKVDRA…RQSLMEMQSR (109 aa)) are interaction with MYO6. The UBAN motif lies at 468–473 (DFHAER). The residue at position 520 (serine 520) is a Phosphoserine. The segment at 541–571 (QRNIPIHSCPKCGEVLPDIDTLQIHVMDCII) adopts a CCHC NOA-type zinc-finger fold. Zn(2+) is bound by residues cysteine 549, cysteine 552, histidine 565, and cysteine 569.

As to quaternary structure, self-associates. Interacts with HD. Interacts with GTF3A. Interacts with MYO6. Interacts (via UBAN) with ubiquitinated TFRC. Interacts with GTP-bound Rab8 (RAB8A and/or RAB8B). Interacts with TBC1D17. Interacts with TBK1. Interacts with TRAF3. Binds to linear ubiquitin chains. Interacts with LC3 family members MAP1LC3A, MAP1LC3B, GABARAP, GABARAPL1 and GABARAPL2; OPTN phosphorylation increases the association (at least with MAP1LC3B). Interacts with RAB12; the interaction may be indirect. Interacts with TBK1; this interaction leads to the Golgi localization of TBK1 and its subsequent activation. Interacts with palmitoyltransferase ZDHHC17/HIP14; the interaction does not lead to palmitoylation of OPTN. Interacts with CYLD. Interacts with TOM1; the interaction is indirect and is mediated by MYO6, which acts as a bridge between TOM1 and OPTN. Interacts with USP12; the interaction is independent of USP12 deubiquitinase activity and may be involved in regulation of autophagic flux. Post-translationally, phosphorylated by TBK1, leading to restrict bacterial proliferation in case of infection. As to expression, present in aqueous humor of the eye (at protein level).

The protein resides in the cytoplasm. It is found in the perinuclear region. It localises to the golgi apparatus. Its subcellular location is the trans-Golgi network. The protein localises to the cytoplasmic vesicle. The protein resides in the autophagosome. It is found in the recycling endosome. Its function is as follows. Plays an important role in the maintenance of the Golgi complex, in membrane trafficking, in exocytosis, through its interaction with myosin VI and Rab8. Links myosin VI to the Golgi complex and plays an important role in Golgi ribbon formation. Negatively regulates the induction of IFNB in response to RNA virus infection. Plays a neuroprotective role in the eye and optic nerve. Probably part of the TNF-alpha signaling pathway that can shift the equilibrium toward induction of cell death. May act by regulating membrane trafficking and cellular morphogenesis via a complex that contains Rab8 and huntingtin (HD). Mediates the interaction of Rab8 with the probable GTPase-activating protein TBC1D17 during Rab8-mediated endocytic trafficking, such as that of transferrin receptor (TFRC/TfR); regulates Rab8 recruitment to tubules emanating from the endocytic recycling compartment. Autophagy receptor that interacts directly with both the cargo to become degraded and an autophagy modifier of the MAP1 LC3 family; targets ubiquitin-coated bacteria (xenophagy) and appears to function in the same pathway as SQSTM1 and CALCOCO2/NDP52. The protein is Optineurin (OPTN) of Macaca mulatta (Rhesus macaque).